The chain runs to 86 residues: Large ribosomal subunit protein eL20 (86 aa).

Belongs to the eukaryotic ribosomal protein eL20 family. In terms of assembly, part of the 50S ribosomal subunit. Binds 23S rRNA.

This Saccharolobus islandicus (strain Y.N.15.51 / Yellowstone #2) (Sulfolobus islandicus) protein is Large ribosomal subunit protein eL20.